The primary structure comprises 394 residues: Chalcone synthase 2 (394 aa).

Cysteine 167 is a catalytic residue.

Belongs to the thiolase-like superfamily. Chalcone/stilbene synthases family.

The catalysed reaction is (E)-4-coumaroyl-CoA + 3 malonyl-CoA + 3 H(+) = 2',4,4',6'-tetrahydroxychalcone + 3 CO2 + 4 CoA. Its pathway is secondary metabolite biosynthesis; flavonoid biosynthesis. Its function is as follows. The primary product of this enzyme is 4,2',4',6'-tetrahydroxychalcone (also termed naringenin-chalcone or chalcone) which can under specific conditions spontaneously isomerize into naringenin. This is Chalcone synthase 2 (CHS2) from Secale cereale (Rye).